The chain runs to 185 residues: CASP-like protein SELMODRAFT_413556 (185 aa).

The Cytoplasmic portion of the chain corresponds to 1–89 (MATLPLSLIF…AVTVLFYLAK (89 aa)). Residues 90–110 (LVFGILGLALSIIWLLHIIVF) form a helical membrane-spanning segment. At 111–131 (MLVNPPAFPFLNQVFIQLDSA) the chain is on the extracellular side. The helical transmembrane segment at 132–152 (WGLLGTTAFAIFCYYLIMSVI) threads the bilayer. At 153–163 (SGEMHSIHPMK) the chain is on the cytoplasmic side. Residues 164–184 (YQGTLMNSFLFNVAIILLCST) form a helical membrane-spanning segment. Arginine 185 is a topological domain (extracellular).

This sequence belongs to the Casparian strip membrane proteins (CASP) family. As to quaternary structure, homodimer and heterodimers.

It is found in the cell membrane. The polypeptide is CASP-like protein SELMODRAFT_413556 (Selaginella moellendorffii (Spikemoss)).